Here is a 379-residue protein sequence, read N- to C-terminus: Chaperone protein DnaJ (379 aa).

A J domain is found at 5 to 70; sequence DYYEVLGVGK…EKKAAYDQYG (66 aa). The CR-type zinc finger occupies 139-217; the sequence is GHEAQIRVPH…CHGQGKLKSQ (79 aa). Zn(2+)-binding residues include Cys152, Cys155, Cys169, Cys172, Cys191, Cys194, Cys205, and Cys208. CXXCXGXG motif repeat units follow at residues 152–159, 169–176, 191–198, and 205–212; these read CEHCHGNG, CPTCNGVG, CPKCHGSG, and CTKCHGQG.

This sequence belongs to the DnaJ family. Homodimer. Zn(2+) is required as a cofactor.

It localises to the cytoplasm. Functionally, participates actively in the response to hyperosmotic and heat shock by preventing the aggregation of stress-denatured proteins and by disaggregating proteins, also in an autonomous, DnaK-independent fashion. Unfolded proteins bind initially to DnaJ; upon interaction with the DnaJ-bound protein, DnaK hydrolyzes its bound ATP, resulting in the formation of a stable complex. GrpE releases ADP from DnaK; ATP binding to DnaK triggers the release of the substrate protein, thus completing the reaction cycle. Several rounds of ATP-dependent interactions between DnaJ, DnaK and GrpE are required for fully efficient folding. Also involved, together with DnaK and GrpE, in the DNA replication of plasmids through activation of initiation proteins. The chain is Chaperone protein DnaJ from Cupriavidus metallidurans (strain ATCC 43123 / DSM 2839 / NBRC 102507 / CH34) (Ralstonia metallidurans).